A 204-amino-acid chain; its full sequence is DNA-directed RNA polymerase subunit gamma (204 aa).

Positions 34, 36, 49, and 52 each coordinate Zn(2+).

The protein belongs to the RNA polymerase beta' chain family. RpoC1 subfamily. In terms of assembly, in cyanobacteria the RNAP catalytic core is composed of 2 alpha, 1 beta, 1 beta', 1 gamma and 1 omega subunit. When a sigma factor is associated with the core the holoenzyme is formed, which can initiate transcription. The cofactor is Zn(2+).

The enzyme catalyses RNA(n) + a ribonucleoside 5'-triphosphate = RNA(n+1) + diphosphate. Its function is as follows. DNA-dependent RNA polymerase catalyzes the transcription of DNA into RNA using the four ribonucleoside triphosphates as substrates. The sequence is that of DNA-directed RNA polymerase subunit gamma (rpoC1) from Prochlorococcus marinus (strain DV1).